The following is a 161-amino-acid chain: Ubiquitin-conjugating enzyme 15 (161 aa).

The UBC core domain maps to 15–161 (IACNRLQKEL…TRWWFHDDKV (147 aa)). Catalysis depends on Cys99, which acts as the Glycyl thioester intermediate.

This sequence belongs to the ubiquitin-conjugating enzyme family.

It catalyses the reaction S-ubiquitinyl-[E1 ubiquitin-activating enzyme]-L-cysteine + [E2 ubiquitin-conjugating enzyme]-L-cysteine = [E1 ubiquitin-activating enzyme]-L-cysteine + S-ubiquitinyl-[E2 ubiquitin-conjugating enzyme]-L-cysteine.. Its pathway is protein modification; protein ubiquitination. Functionally, accepts the ubiquitin from the E1 complex and catalyzes its covalent attachment to other proteins. The polypeptide is Ubiquitin-conjugating enzyme 15 (UBC15) (Arabidopsis thaliana (Mouse-ear cress)).